A 299-amino-acid polypeptide reads, in one-letter code: NmrA-like family domain-containing protein 1 (299 aa).

Residues 11–16 (GATGAQ), 37–41 (RDPGQ), 58–59 (DQ), 79–81 (TNY), lysine 92, lysine 133, and 155–158 (YFEN) each bind NADP(+). Residues 153–189 (PCYFENLLSYFLPQKAPDGRSYLLSLPMGDVPIDGMS) form an interaction with ASS1 region.

The protein belongs to the NmrA-type oxidoreductase family. In terms of assembly, homodimer. Interacts with ASS1. Interaction is enhanced by low NADPH/NADP(+) ratios, which results in inhibition of ASS1 activity.

It is found in the cytoplasm. The protein localises to the perinuclear region. It localises to the nucleus. Redox sensor protein. Undergoes restructuring and subcellular redistribution in response to changes in intracellular NADPH/NADP(+) levels. At low NADPH concentrations the protein is found mainly as a monomer, and binds argininosuccinate synthase (ASS1), the enzyme involved in nitric oxide synthesis. Association with ASS1 impairs its activity and reduces the production of nitric oxide, which subsecuently prevents apoptosis. Under normal NADPH concentrations, the protein is found as a dimer and hides the binding site for ASS1. The homodimer binds one molecule of NADPH. Has higher affinity for NADPH than for NADP(+). Binding to NADPH is necessary to form a stable dimer. The sequence is that of NmrA-like family domain-containing protein 1 (NMRAL1) from Bos taurus (Bovine).